Here is a 388-residue protein sequence, read N- to C-terminus: Mitochondrial distribution and morphology protein 12 (388 aa).

One can recognise an SMP-LTD domain in the interval 1–388 (MSLDINWSLL…VFPNFHTVAL (388 aa)). Disordered regions lie at residues 75-101 (DDEGDFAEEEKQREKEREERDKLRNEA) and 209-251 (PMSI…SSSS). The segment covering 83 to 101 (EEKQREKEREERDKLRNEA) has biased composition (basic and acidic residues). The span at 234-243 (PSPPAHPAGL) shows a compositional bias: pro residues.

It belongs to the MDM12 family. Component of the ER-mitochondria encounter structure (ERMES) or MDM complex, composed of MMM1, MDM10, MDM12 and MDM34. An MMM1 homodimer associates with one molecule of MDM12 on each side in a pairwise head-to-tail manner, and the SMP-LTD domains of MMM1 and MDM12 generate a continuous hydrophobic tunnel for phospholipid trafficking.

Its subcellular location is the mitochondrion outer membrane. It localises to the endoplasmic reticulum membrane. Component of the ERMES/MDM complex, which serves as a molecular tether to connect the endoplasmic reticulum (ER) and mitochondria. Components of this complex are involved in the control of mitochondrial shape and protein biogenesis, and function in nonvesicular lipid trafficking between the ER and mitochondria. MDM12 is required for the interaction of the ER-resident membrane protein MMM1 and the outer mitochondrial membrane-resident beta-barrel protein MDM10. The MDM12-MMM1 subcomplex functions in the major beta-barrel assembly pathway that is responsible for biogenesis of all mitochondrial outer membrane beta-barrel proteins, and acts in a late step after the SAM complex. The MDM10-MDM12-MMM1 subcomplex further acts in the TOM40-specific pathway after the action of the MDM12-MMM1 complex. Essential for establishing and maintaining the structure of mitochondria and maintenance of mtDNA nucleoids. This Cryptococcus neoformans var. neoformans serotype D (strain B-3501A) (Filobasidiella neoformans) protein is Mitochondrial distribution and morphology protein 12.